The sequence spans 526 residues: Osmo-independent choline transporter BetT1 (526 aa).

The Cytoplasmic portion of the chain corresponds to 1 to 17 (MWSKRDEQKTYPPIRLN). Residues 18-38 (PFVFWSSAISISIFGMLFVLF) form a helical membrane-spanning segment. Residues 39 to 56 (PETSQHGLTWIQQQVNQL) are Periplasmic-facing. The chain crosses the membrane as a helical span at residues 57-77 (FGWYYMLVIILSLGFVAWLAF). The Cytoplasmic portion of the chain corresponds to 78–93 (SQVGNIPLGKAQDKPE). A helical membrane pass occupies residues 94 to 114 (FGYLVWTSMLFSAGIGIALLY). Over 115–148 (YGVAEPVDHFLRPPEGQGGTVEAAQNAMMYSFLH) the chain is Periplasmic. The helical transmembrane segment at 149–169 (WGIHGWVLYALVGVTLGYFAF) threads the bilayer. Topologically, residues 170–200 (RRDLPLALRSALYPIFGERIHGLVGHMVDGF) are cytoplasmic. Residues 201-221 (GILATIISLVTNLGIGALVMI) form a helical membrane-spanning segment. Residues 222–236 (SGISYLFPDLPNTSS) lie on the Periplasmic side of the membrane. Residues 237 to 257 (TLVVTVIMMMLVATLTTVIGI) traverse the membrane as a helical segment. The Cytoplasmic segment spans residues 258–272 (EKGLAWLSRINLRLL). The chain crosses the membrane as a helical span at residues 273-293 (YLLLLFVFLTGPTNHLLNGLV). The Periplasmic portion of the chain corresponds to 294–323 (QNTGDYLSHFVQKSFDLYLYDKNATGWLAS). A helical transmembrane segment spans residues 324 to 344 (WTIFYWAWWIAWAPFVGMFIA). The Cytoplasmic segment spans residues 345 to 354 (RISKGRTIRE). The helical transmembrane segment at 355–375 (VVLGVCLIPLGFTLAWISIFG) threads the bilayer. Residues 376–417 (NTAIDLILNHGQQIIGSLVIQDPALSLFKLLEYLPFHPYVAG) are Periplasmic-facing. Residues 418-438 (IVVVICFVLFLTPVGSGTLMI) traverse the membrane as a helical segment. The Cytoplasmic segment spans residues 439-457 (ANLSSQGGSSDSDSPIWLR). A helical membrane pass occupies residues 458–478 (VFWSIAITIVSIGLLLAGSFS). The Periplasmic portion of the chain corresponds to 479-482 (AMQS). Residues 483 to 503 (AVVLCGLPFSVILLLYMFGLA) traverse the membrane as a helical segment. Topologically, residues 504-526 (KALKQETQQPVVESHTTETSGSD) are cytoplasmic.

Belongs to the BCCT transporter (TC 2.A.15) family.

The protein resides in the cell inner membrane. In terms of biological role, sodium-independent high-affinity choline uptake system. Uptake is not proton coupled. May play a role in metabolic adaptation to choline-containing environments. This Acinetobacter baylyi (strain ATCC 33305 / BD413 / ADP1) protein is Osmo-independent choline transporter BetT1.